A 142-amino-acid polypeptide reads, in one-letter code: Peptide methionine sulfoxide reductase MsrB (142 aa).

Positions 2 to 125 (LKKDKSELTD…NSAAIQFIPY (124 aa)) constitute a MsrB domain. Cysteine 114 acts as the Nucleophile in catalysis.

The protein belongs to the MsrB Met sulfoxide reductase family.

It catalyses the reaction L-methionyl-[protein] + [thioredoxin]-disulfide + H2O = L-methionyl-(R)-S-oxide-[protein] + [thioredoxin]-dithiol. This Staphylococcus aureus (strain bovine RF122 / ET3-1) protein is Peptide methionine sulfoxide reductase MsrB.